Reading from the N-terminus, the 93-residue chain is uncharacterized protein (93 aa).

A coiled-coil region spans residues 25–68 (DIKKLSQVKSELEQGKALLEEEKKELIEKNSNLNLQISNMNHLK).

This is an uncharacterized protein from Dictyostelium discoideum (Social amoeba).